Consider the following 881-residue polypeptide: Valine--tRNA ligase (881 aa).

The 'HIGH' region signature appears at 42 to 52 (PNITGDLHVGH). The 'KMSKS' region signature appears at 554–558 (KMSKS). An ATP-binding site is contributed by K557.

Belongs to the class-I aminoacyl-tRNA synthetase family. ValS type 1 subfamily. Monomer.

It is found in the cytoplasm. It catalyses the reaction tRNA(Val) + L-valine + ATP = L-valyl-tRNA(Val) + AMP + diphosphate. Functionally, catalyzes the attachment of valine to tRNA(Val). As ValRS can inadvertently accommodate and process structurally similar amino acids such as threonine, to avoid such errors, it has a 'posttransfer' editing activity that hydrolyzes mischarged Thr-tRNA(Val) in a tRNA-dependent manner. The chain is Valine--tRNA ligase from Wigglesworthia glossinidia brevipalpis.